We begin with the raw amino-acid sequence, 861 residues long: APC membrane recruitment protein 3 (861 aa).

Disordered stretches follow at residues M1–G77, A179–E206, P261–Q289, P351–D415, R514–T558, G576–E644, M716–D742, and A786–E822. Residues S362–D384 show a composition bias toward polar residues. Pro residues predominate over residues P518–P530. The segment covering A584–L595 has biased composition (low complexity). Over residues D598–S609 the composition is skewed to basic and acidic residues. 2 stretches are compositionally biased toward polar residues: residues S615 to K629 and Q719 to T730.

The protein belongs to the Amer family.

Its subcellular location is the cell membrane. Regulator of the canonical Wnt signaling pathway. Acts by specifically binding phosphatidylinositol 4,5-bisphosphate (PtdIns(4,5)P2), translocating to the cell membrane. This is APC membrane recruitment protein 3 (AMER3) from Homo sapiens (Human).